Here is a 389-residue protein sequence, read N- to C-terminus: MEMKDFIFTSESVSEGHPDKVADQVSDAILDAILTQDPKSRVACETLVTTGMTVVAGEITTNAIVDYPKIVRETIKEIGYNDSAMGFDWETCAVLTSIDKQSPDIAQGVTEGEGLFKEQGAGDQGLMFGYACNETPELMPMSILLSHKLVKKLADVRKSGVLDFLRPDSKSQVSIQYINDRPVHVDTVVISSQHTPEVSYETIKEGIIEEVVKKIIPEELMDAKTRFLINPTGRFVIGGPMGDCGLTGRKIIVDSYGGHGAHGGGAFSGKDPSKVDRSAAYMGRYVAKNLVAAGLCEKCEVQVAYAIGVAEPVSVMVDTSGTGKIPSARIAQIVREVFDLRPRAIIEQLDLLRPIYKKTAAYGHFGRELPEFTWERTDKVSIIREKAGI.

Histidine 17 serves as a coordination point for ATP. Aspartate 19 is a binding site for Mg(2+). Glutamate 45 lines the K(+) pocket. Positions 58 and 101 each coordinate L-methionine. Positions 101–111 are flexible loop; that stretch reads QSPDIAQGVTE. Residues 168 to 170, 234 to 235, aspartate 243, 249 to 250, alanine 266, and lysine 270 contribute to the ATP site; these read DSK, RF, and RK. Aspartate 243 contributes to the L-methionine binding site. An L-methionine-binding site is contributed by lysine 274.

The protein belongs to the AdoMet synthase family. In terms of assembly, homotetramer; dimer of dimers. Mg(2+) is required as a cofactor. The cofactor is K(+).

Its subcellular location is the cytoplasm. The enzyme catalyses L-methionine + ATP + H2O = S-adenosyl-L-methionine + phosphate + diphosphate. Its pathway is amino-acid biosynthesis; S-adenosyl-L-methionine biosynthesis; S-adenosyl-L-methionine from L-methionine: step 1/1. Functionally, catalyzes the formation of S-adenosylmethionine (AdoMet) from methionine and ATP. The overall synthetic reaction is composed of two sequential steps, AdoMet formation and the subsequent tripolyphosphate hydrolysis which occurs prior to release of AdoMet from the enzyme. In Geotalea uraniireducens (strain Rf4) (Geobacter uraniireducens), this protein is S-adenosylmethionine synthase.